We begin with the raw amino-acid sequence, 307 residues long: GTPase Era (307 aa).

The region spanning 13–180 (RCGFVALIGA…RRALAEMVPP (168 aa)) is the Era-type G domain. A G1 region spans residues 21–28 (GAPNVGKS). Position 21 to 28 (21 to 28 (GAPNVGKS)) interacts with GTP. Residues 47 to 51 (QTTRA) are G2. Residues 68-71 (DTPG) are G3. GTP is bound by residues 68-72 (DTPGI) and 130-133 (NKVD). The tract at residues 130 to 133 (NKVD) is G4. The G5 stretch occupies residues 159-161 (ISA). The region spanning 211–288 (LHQELPYQST…HLFLFVKVRE (78 aa)) is the KH type-2 domain.

The protein belongs to the TRAFAC class TrmE-Era-EngA-EngB-Septin-like GTPase superfamily. Era GTPase family. As to quaternary structure, monomer.

It localises to the cytoplasm. It is found in the cell inner membrane. Functionally, an essential GTPase that binds both GDP and GTP, with rapid nucleotide exchange. Plays a role in 16S rRNA processing and 30S ribosomal subunit biogenesis and possibly also in cell cycle regulation and energy metabolism. The protein is GTPase Era of Bradyrhizobium sp. (strain ORS 278).